We begin with the raw amino-acid sequence, 509 residues long: Maturase K (509 aa).

The protein belongs to the intron maturase 2 family. MatK subfamily.

Its subcellular location is the plastid. The protein resides in the chloroplast. In terms of biological role, usually encoded in the trnK tRNA gene intron. Probably assists in splicing its own and other chloroplast group II introns. This is Maturase K from Banksia cuneata (Quairading banksia).